The chain runs to 803 residues: Nucleoporin nup82 (803 aa).

In terms of assembly, component of the nuclear pore complex (NPC). NPC constitutes the exclusive means of nucleocytoplasmic transport. NPCs allow the passive diffusion of ions and small molecules and the active, nuclear transport receptor-mediated bidirectional transport of macromolecules such as proteins, RNAs, ribonucleoparticles (RNPs), and ribosomal subunits across the nuclear envelope.

The protein resides in the nucleus. It is found in the nuclear pore complex. Its subcellular location is the nucleus membrane. Functionally, functions as a component of the nuclear pore complex (NPC). NPC components, collectively referred to as nucleoporins (NUPs), can play the role of both NPC structural components and of docking or interaction partners for transiently associated nuclear transport factors. The polypeptide is Nucleoporin nup82 (Schizosaccharomyces pombe (strain 972 / ATCC 24843) (Fission yeast)).